A 486-amino-acid polypeptide reads, in one-letter code: Glutamyl-tRNA(Gln) amidotransferase subunit A (486 aa).

Catalysis depends on charge relay system residues Lys-75 and Ser-150. Ser-174 (acyl-ester intermediate) is an active-site residue.

Belongs to the amidase family. GatA subfamily. As to quaternary structure, heterotrimer of A, B and C subunits.

It catalyses the reaction L-glutamyl-tRNA(Gln) + L-glutamine + ATP + H2O = L-glutaminyl-tRNA(Gln) + L-glutamate + ADP + phosphate + H(+). Functionally, allows the formation of correctly charged Gln-tRNA(Gln) through the transamidation of misacylated Glu-tRNA(Gln) in organisms which lack glutaminyl-tRNA synthetase. The reaction takes place in the presence of glutamine and ATP through an activated gamma-phospho-Glu-tRNA(Gln). This Nostoc sp. (strain PCC 7120 / SAG 25.82 / UTEX 2576) protein is Glutamyl-tRNA(Gln) amidotransferase subunit A.